Reading from the N-terminus, the 466-residue chain is Histidine--tRNA ligase (466 aa).

Belongs to the class-II aminoacyl-tRNA synthetase family. In terms of assembly, homodimer.

The protein resides in the cytoplasm. It catalyses the reaction tRNA(His) + L-histidine + ATP = L-histidyl-tRNA(His) + AMP + diphosphate + H(+). The chain is Histidine--tRNA ligase from Xylella fastidiosa (strain M12).